Reading from the N-terminus, the 107-residue chain is Nucleoid-associated protein Mlg_1509 (107 aa).

It belongs to the YbaB/EbfC family. Homodimer.

It is found in the cytoplasm. The protein resides in the nucleoid. Its function is as follows. Binds to DNA and alters its conformation. May be involved in regulation of gene expression, nucleoid organization and DNA protection. The protein is Nucleoid-associated protein Mlg_1509 of Alkalilimnicola ehrlichii (strain ATCC BAA-1101 / DSM 17681 / MLHE-1).